A 520-amino-acid polypeptide reads, in one-letter code: CUGBP Elav-like family member 4 (520 aa).

3 RRM domains span residues 47–128, 135–215, and 435–513; these read IKLF…PADS, RKLF…FADT, and CNLF…LKRP.

Belongs to the CELF/BRUNOL family.

It localises to the nucleus. It is found in the cytoplasm. Its function is as follows. RNA-binding protein that may be implicated in the regulation of pre-mRNA alternative splicing. This chain is CUGBP Elav-like family member 4 (celf4), found in Danio rerio (Zebrafish).